We begin with the raw amino-acid sequence, 796 residues long: Probable phosphoketolase 2 (796 aa).

It belongs to the XFP family. It depends on thiamine diphosphate as a cofactor.

This chain is Probable phosphoketolase 2, found in Lactiplantibacillus plantarum (strain ATCC BAA-793 / NCIMB 8826 / WCFS1) (Lactobacillus plantarum).